Consider the following 196-residue polypeptide: Elongation factor Ts (196 aa).

The tract at residues 80–83 (TDFV) is involved in Mg(2+) ion dislocation from EF-Tu.

The protein belongs to the EF-Ts family.

The protein localises to the cytoplasm. Associates with the EF-Tu.GDP complex and induces the exchange of GDP to GTP. It remains bound to the aminoacyl-tRNA.EF-Tu.GTP complex up to the GTP hydrolysis stage on the ribosome. This Thermosipho melanesiensis (strain DSM 12029 / CIP 104789 / BI429) protein is Elongation factor Ts.